The primary structure comprises 590 residues: NADH-ubiquinone oxidoreductase chain 5 (590 aa).

A run of 15 helical transmembrane segments spans residues 1–21 (MNLI…MSIM), 31–51 (LMVL…NNEL), 77–97 (LLFT…SLWY), 104–124 (INKF…IITA), 130–150 (LFIG…WWHG), 167–187 (IGDI…SINM), 190–210 (LMIQ…AAAT), 230–250 (TPVS…FLLI), 261–281 (IMLT…AAAA), 314–336 (AFLH…GSYI), 355–375 (LPMT…MPFL), 398–418 (IMIT…IMLF), 439–461 (HPLA…STLQ), 466–486 (VTMP…GVLL), and 568–588 (MIKN…LFIM).

Belongs to the complex I subunit 5 family.

Its subcellular location is the mitochondrion inner membrane. The enzyme catalyses a ubiquinone + NADH + 5 H(+)(in) = a ubiquinol + NAD(+) + 4 H(+)(out). Core subunit of the mitochondrial membrane respiratory chain NADH dehydrogenase (Complex I) that is believed to belong to the minimal assembly required for catalysis. Complex I functions in the transfer of electrons from NADH to the respiratory chain. The immediate electron acceptor for the enzyme is believed to be ubiquinone. This is NADH-ubiquinone oxidoreductase chain 5 (MT-ND5) from Lycodon semicarinatus (Ryukyu odd-tooth snake).